The chain runs to 222 residues: Eukaryotic translation initiation factor 3 subunit K (222 aa).

The region spanning 46-208 (YDLEANLAVL…KIKTKNITEK (163 aa)) is the PCI domain.

Belongs to the eIF-3 subunit K family. As to quaternary structure, component of the eukaryotic translation initiation factor 3 (eIF-3) complex. The eIF-3 complex interacts with pix.

The protein resides in the cytoplasm. Component of the eukaryotic translation initiation factor 3 (eIF-3) complex, which is involved in protein synthesis of a specialized repertoire of mRNAs and, together with other initiation factors, stimulates binding of mRNA and methionyl-tRNAi to the 40S ribosome. The eIF-3 complex specifically targets and initiates translation of a subset of mRNAs involved in cell proliferation. In Drosophila yakuba (Fruit fly), this protein is Eukaryotic translation initiation factor 3 subunit K.